A 158-amino-acid polypeptide reads, in one-letter code: Small ribosomal subunit protein uS7 (158 aa).

The protein belongs to the universal ribosomal protein uS7 family. In terms of assembly, part of the 30S ribosomal subunit. Contacts proteins S9 and S11.

In terms of biological role, one of the primary rRNA binding proteins, it binds directly to 16S rRNA where it nucleates assembly of the head domain of the 30S subunit. Is located at the subunit interface close to the decoding center, probably blocks exit of the E-site tRNA. The sequence is that of Small ribosomal subunit protein uS7 from Leptospira biflexa.